The sequence spans 232 residues: Sugar fermentation stimulation protein homolog (232 aa).

It belongs to the SfsA family.

The chain is Sugar fermentation stimulation protein homolog from Acidithiobacillus ferrooxidans (strain ATCC 23270 / DSM 14882 / CIP 104768 / NCIMB 8455) (Ferrobacillus ferrooxidans (strain ATCC 23270)).